A 214-amino-acid chain; its full sequence is Charged multivesicular body protein 2b-A (214 aa).

Positions 25 to 55 form a coiled coil; that stretch reads QRAITRDRTALEKQEKQLEMEIKKMAKAGNK. The interval 178 to 214 is disordered; the sequence is MAKAPSAAKGLPSASASKSTGISDEEIERQLKALGVD. The MIT-interacting motif motif lies at 202-212; it reads EEIERQLKALG.

Belongs to the SNF7 family. Probable core component of the endosomal sorting required for transport complex III (ESCRT-III). ESCRT-III components are thought to multimerize to form a flat lattice on the perimeter membrane of the endosome.

The protein resides in the cytoplasm. It localises to the cytosol. It is found in the late endosome membrane. Functionally, probable core component of the endosomal sorting required for transport complex III (ESCRT-III) which is involved in multivesicular bodies (MVBs) formation and sorting of endosomal cargo proteins into MVBs. MVBs contain intraluminal vesicles (ILVs) that are generated by invagination and scission from the limiting membrane of the endosome and mostly are delivered to lysosomes enabling degradation of membrane proteins, such as stimulated growth factor receptors, lysosomal enzymes and lipids. The sequence is that of Charged multivesicular body protein 2b-A (chmp2b-a) from Xenopus laevis (African clawed frog).